Reading from the N-terminus, the 856-residue chain is Phosphoenolpyruvate synthase (856 aa).

His-433 (tele-phosphohistidine intermediate) is an active-site residue. Substrate is bound by residues Arg-523, Arg-636, Glu-738, Gly-759, Ser-760, Asn-761, and Asp-762. Glu-738 is a Mg(2+) binding site. Residue Asp-762 coordinates Mg(2+). The active-site Proton donor is Cys-809.

It belongs to the PEP-utilizing enzyme family. Requires Mg(2+) as cofactor.

It carries out the reaction pyruvate + ATP + H2O = phosphoenolpyruvate + AMP + phosphate + 2 H(+). It functions in the pathway carbohydrate biosynthesis; gluconeogenesis. In terms of biological role, catalyzes the phosphorylation of pyruvate to phosphoenolpyruvate. This chain is Phosphoenolpyruvate synthase (ppsA), found in Aquifex aeolicus (strain VF5).